The following is a 484-amino-acid chain: UDP-glycosyltransferase 73B4 (484 aa).

Histidine 18 serves as the catalytic Proton acceptor. Residues histidine 18 and asparagine 89 each coordinate an anthocyanidin. Catalysis depends on aspartate 129, which acts as the Charge relay. Alanine 356, glutamine 358, histidine 373, tryptophan 376, asparagine 377, serine 378, and glutamate 381 together coordinate UDP-alpha-D-glucose. Alanine 396 contributes to the an anthocyanidin binding site. The UDP-alpha-D-glucose site is built by glutamate 397 and glutamine 398.

It belongs to the UDP-glycosyltransferase family. In terms of tissue distribution, specifically expressed in roots.

It catalyses the reaction a flavonol + UDP-alpha-D-glucose = a flavonol 3-O-beta-D-glucoside + UDP + H(+). Functionally, possesses quercetin 3-O-glucosyltransferase and low 7-O-glucosyltransferase activities in vitro. Also active in vitro on benzoates and benzoate derivatives. Can detoxify the explosive 2,4,6-trinitrotoluene in plant by forming O- or C-glucose conjugates. The polypeptide is UDP-glycosyltransferase 73B4 (UGT73B4) (Arabidopsis thaliana (Mouse-ear cress)).